The chain runs to 363 residues: 3-isopropylmalate dehydrogenase (363 aa).

Residue G78–E91 coordinates NAD(+). Residues R99, R109, R138, and D227 each contribute to the substrate site. The Mg(2+) site is built by D227, D251, and D255. An NAD(+)-binding site is contributed by G285–N297.

This sequence belongs to the isocitrate and isopropylmalate dehydrogenases family. LeuB type 1 subfamily. In terms of assembly, homodimer. Requires Mg(2+) as cofactor. It depends on Mn(2+) as a cofactor.

The protein resides in the cytoplasm. It catalyses the reaction (2R,3S)-3-isopropylmalate + NAD(+) = 4-methyl-2-oxopentanoate + CO2 + NADH. Its pathway is amino-acid biosynthesis; L-leucine biosynthesis; L-leucine from 3-methyl-2-oxobutanoate: step 3/4. Functionally, catalyzes the oxidation of 3-carboxy-2-hydroxy-4-methylpentanoate (3-isopropylmalate) to 3-carboxy-4-methyl-2-oxopentanoate. The product decarboxylates to 4-methyl-2 oxopentanoate. In Pectobacterium atrosepticum (strain SCRI 1043 / ATCC BAA-672) (Erwinia carotovora subsp. atroseptica), this protein is 3-isopropylmalate dehydrogenase.